The sequence spans 201 residues: Small ribosomal subunit protein uS10m (201 aa).

It belongs to the universal ribosomal protein uS10 family. As to quaternary structure, component of the mitochondrial ribosome small subunit (28S) which comprises a 12S rRNA and about 30 distinct proteins.

It localises to the mitochondrion. This is Small ribosomal subunit protein uS10m (MRPS10) from Pongo abelii (Sumatran orangutan).